The sequence spans 281 residues: NAD kinase (281 aa).

Residue aspartate 61 is the Proton acceptor of the active site. NAD(+) contacts are provided by residues 61–62 (DG), 134–135 (ND), arginine 145, aspartate 164, 175–180 (TAYSLS), and glutamine 234.

The protein belongs to the NAD kinase family. Requires a divalent metal cation as cofactor.

Its subcellular location is the cytoplasm. The enzyme catalyses NAD(+) + ATP = ADP + NADP(+) + H(+). Its function is as follows. Involved in the regulation of the intracellular balance of NAD and NADP, and is a key enzyme in the biosynthesis of NADP. Catalyzes specifically the phosphorylation on 2'-hydroxyl of the adenosine moiety of NAD to yield NADP. In Clostridium botulinum (strain ATCC 19397 / Type A), this protein is NAD kinase.